The primary structure comprises 4377 residues: Ankyrin-3 (4377 aa).

The disordered stretch occupies residues 1–44; it reads MAHAASQLKKNRDLEINAEEEPEKKRKHRKRSRDRKKKSDANAS. Basic residues predominate over residues 25–38; that stretch reads KRKHRKRSRDRKKK. S39 is modified (phosphoserine). ANK repeat units follow at residues 73 to 102, 106 to 135, 139 to 168, 172 to 201, 203 to 230, 234 to 263, 267 to 296, 300 to 329, 333 to 362, 366 to 395, 399 to 428, 432 to 461, 465 to 494, 498 to 527, 531 to 560, 564 to 593, 597 to 626, 630 to 659, 663 to 692, 696 to 725, 729 to 758, 762 to 791, and 795 to 825; these read NGLN…NVDA, KGNT…NVNA, NGFT…SQSL, DGFT…KGKV, LPAL…NADV, SGFT…AVDF, NDIT…KIDA, DGLT…PILS, NGLS…PVDD, DYLT…NPNA, NGFT…SIQA, SGLT…SPNT, RGET…QVEA, DDQT…SPNA, SGYT…SLSI, KGFT…SPDA, SGLT…SPHA, NGYT…DANA, QGIA…NVNL, SGLT…HVDA, MGYT…KVNA, NGYT…SPNE, and NGNT…TMTT. Residue T468 is modified to Phosphoserine. A Phosphoserine modification is found at S623. Residues T765 and E791 each carry the phosphoserine modification. Residues S847, S861, S867, S913, S916, S922, S957, S959, and S1113 each carry the phosphoserine modification. ZU5 domains are found at residues 984-1139 and 1141-1288; these read FLVS…VVSR and KQES…LADC. Residues 1273-1407 form a UPA domain region; the sequence is VSFTTNVSAR…SIKIRDTSQE (135 aa). 3 positions are modified to phosphoserine: S1445, S1459, and S1470. Low complexity predominate over residues 1519–1539; the sequence is SGFTSLSSSSSNTPSASPLKS. Residues 1519–1540 form a disordered region; sequence SGFTSLSSSSSNTPSASPLKSI. S1622, S1625, S1632, I1651, L1658, S1984, S2111, S2123, and S2126 each carry phosphoserine. Disordered regions lie at residues 1968–1987, 2107–2159, 2176–2245, 2299–2322, 2383–2433, 2474–2508, 2588–2751, 2795–2824, 3036–3067, 3131–3272, 3298–3516, 3538–3607, 3635–3718, 3868–3897, and 4019–4090; these read VDNK…SPED, TILE…VPIP, YDPS…EETH, AVSP…DNQM, FPCS…ISDD, DVSH…KIAT, LTEV…VKKI, QSNE…MPDS, PPLE…DVFD, TFYT…KKHH, PVIR…SVFP, KGLD…HEGK, GEHT…DPKL, KATS…QSEK, and KKMQ…CERT. Residues 1977–1986 show a composition bias toward basic and acidic residues; that stretch reads PKSDKGHSPE. Basic and acidic residues predominate over residues 2115–2136; that stretch reads FSQHDQDKSPLSDSGFETRSEK. A compositionally biased stretch (polar residues) spans 2137 to 2146; sequence TPSAPQSAES. Over residues 2299 to 2308 the composition is skewed to basic and acidic residues; that stretch reads AVSPDVHKSA. Residues 2390–2399 show a composition bias toward acidic residues; that stretch reads GQQEEEELTA. The segment covering 2407 to 2417 has biased composition (polar residues); that stretch reads LESSRVNTPVS. Composition is skewed to basic and acidic residues over residues 2497-2508 and 2588-2612; these read GSDKRSREKIAT and LTEV…PEKK. Over residues 2622–2631 the composition is skewed to low complexity; the sequence is SSQSPTSSSP. A compositionally biased stretch (polar residues) spans 2706–2716; the sequence is SGFQLKQSKLS. Basic and acidic residues predominate over residues 2720–2742; it reads LKFEQGTHAKSKDMSQEDRKSDG. Over residues 2796–2807 the composition is skewed to polar residues; it reads SNEIVVNDSGSD. Polar residues-rich tracts occupy residues 3154-3186 and 3214-3224; these read EQVS…SKTP and KSTSLKQTTVE. Composition is skewed to basic and acidic residues over residues 3227–3242 and 3335–3361; these read AVER…DSNQ and KLKE…KELE. Polar residues predominate over residues 3377–3402; the sequence is SPQNEIAQNGNNDQSITECSIATTAE. A compositionally biased stretch (acidic residues) spans 3409–3428; sequence ATEIDSLDGYDLQDEDDGLT. 2 stretches are compositionally biased toward basic and acidic residues: residues 3465–3481 and 3549–3575; these read EVIE…DKPP and RGDD…EDRS. Positions 3576–3598 are enriched in low complexity; that stretch reads PATTPDTTPARTPTDESTPTSEP. Residues 3637–3651 show a composition bias toward basic and acidic residues; sequence HTSEGKSGDQGEGDK. Composition is skewed to polar residues over residues 3654 to 3669, 3676 to 3713, 3880 to 3897, and 4033 to 4052; these read VTAT…TVET, ETPT…NTSK, HMSN…QSEK, and SRNT…VTTK. Residues 4053–4076 show a composition bias toward basic and acidic residues; that stretch reads SARDKKTEAAPLKSKSEKAGSEKR. Residues 4090 to 4174 enclose the Death domain; it reads TDIRMAIVAD…DIVTLLEGPI (85 aa). 2 positions are modified to phosphoserine: S4211 and S4229. Disordered regions lie at residues 4251–4298 and 4323–4377; these read NGSH…EPAS and PVSM…KSHS. The span at 4268 to 4277 shows a compositional bias: polar residues; that stretch reads PESQNDVGKQ. A phosphoserine mark is found at S4290 and S4298. Residues 4337 to 4347 show a composition bias toward basic and acidic residues; it reads GKPRLSLHEEE. S4350 carries the phosphoserine modification. A compositionally biased stretch (basic residues) spans 4362 to 4377; it reads VKTKKEIRHVEKKSHS.

Directly interacts with DMD and betaDAG1. This interaction does not interfere with binding between DMD and betaDAG1. It is also required for DMD and betaDAG1 retention at costameres. Interacts (via N-terminal ANK repeats) with SCHIP1 isoform 5 (via C-terminus); this interaction is required for the localization at axon initial segments (AISs) and nodes of Ranvier (NRs). May be a constituent of a NFASC/NRCAM/ankyrin G complex. Interacts with RHBG. Interacts with PLEC and FLNC. Interacts with KCNA1; this inhibits channel activity. Interacts (via ANK repeats) with IQCJ-SCHIP1; required for IQCJ-SCHIP1 localization at axon initial segments (AIS) and nodes of Ranvier. Interacts with SCHIP1. Interacts with SCN5A. Interacts with PKP2 and GJA1/CX43. In terms of tissue distribution, expressed in brain, neurons, muscles and other tissues.

The protein localises to the cytoplasm. Its subcellular location is the cytoskeleton. The protein resides in the cell projection. It localises to the axon. It is found in the cell membrane. The protein localises to the sarcolemma. Its subcellular location is the postsynaptic cell membrane. The protein resides in the lysosome. It localises to the T-tubule. It is found in the golgi apparatus. Functionally, membrane-cytoskeleton linker. May participate in the maintenance/targeting of ion channels and cell adhesion molecules at the nodes of Ranvier and axonal initial segments. In skeletal muscle, required for costamere localization of DMD and betaDAG1. Regulates KCNA1 channel activity in function of dietary Mg(2+) levels, and thereby contributes to the regulation of renal Mg(2+) reabsorption. Required for intracellular adhesion and junctional conductance in myocytes, potentially via stabilization of GJA1/CX43 protein abundance and promotion of PKP2, GJA1/CX43, and SCN5A/Nav1.5 localization to cell-cell junctions. Its function is as follows. May be part of a Golgi-specific membrane cytoskeleton in association with beta-spectrin. In Homo sapiens (Human), this protein is Ankyrin-3.